A 455-amino-acid polypeptide reads, in one-letter code: Phosphomethylpyrimidine synthase (455 aa).

Substrate contacts are provided by residues Asn-80, Met-109, Tyr-139, His-175, 195–197, 236–239, and Glu-275; these read SRG and DALR. Residue His-279 participates in Zn(2+) binding. Tyr-302 provides a ligand contact to substrate. His-343 lines the Zn(2+) pocket. [4Fe-4S] cluster is bound by residues Cys-423, Cys-426, and Cys-431.

Belongs to the ThiC family. It depends on [4Fe-4S] cluster as a cofactor.

It catalyses the reaction 5-amino-1-(5-phospho-beta-D-ribosyl)imidazole + S-adenosyl-L-methionine = 4-amino-2-methyl-5-(phosphooxymethyl)pyrimidine + CO + 5'-deoxyadenosine + formate + L-methionine + 3 H(+). The protein operates within cofactor biosynthesis; thiamine diphosphate biosynthesis. Its function is as follows. Catalyzes the synthesis of the hydroxymethylpyrimidine phosphate (HMP-P) moiety of thiamine from aminoimidazole ribotide (AIR) in a radical S-adenosyl-L-methionine (SAM)-dependent reaction. This chain is Phosphomethylpyrimidine synthase, found in Synechococcus sp. (strain JA-3-3Ab) (Cyanobacteria bacterium Yellowstone A-Prime).